Reading from the N-terminus, the 28-residue chain is Potassium channel toxin alpha-KTx 9.10 (28 aa).

3 cysteine pairs are disulfide-bonded: Cys-3–Cys-19, Cys-6–Cys-24, and Cys-10–Cys-26.

It belongs to the short scorpion toxin superfamily. Potassium channel inhibitor family. Alpha-KTx 09 subfamily. Expressed by the venom gland.

It localises to the secreted. Its function is as follows. Blocks Shaker potassium channels. This is Potassium channel toxin alpha-KTx 9.10 from Mesobuthus eupeus (Lesser Asian scorpion).